A 229-amino-acid polypeptide reads, in one-letter code: Potassium/proton antiporter CemA (229 aa).

The next 2 helical transmembrane spans lie at 7-27 (LASL…SISF) and 106-126 (IISH…YFIL).

This sequence belongs to the CemA family.

The protein localises to the plastid. It is found in the chloroplast inner membrane. It carries out the reaction K(+)(in) + H(+)(out) = K(+)(out) + H(+)(in). Contributes to K(+)/H(+) antiport activity by supporting proton efflux to control proton extrusion and homeostasis in chloroplasts in a light-dependent manner to modulate photosynthesis. Prevents excessive induction of non-photochemical quenching (NPQ) under continuous-light conditions. Indirectly promotes efficient inorganic carbon uptake into chloroplasts. This is Potassium/proton antiporter CemA from Cycas taitungensis (Prince sago).